Reading from the N-terminus, the 351-residue chain is MEFAPVSPPDGHAAAAARARQDTLTKPRGALGRLEDLSIWVASCQGQCPPRQFQRARIVVFAGDHGVARSGVSAYPPQLTAQMVANIDRGGAAINALASIADATIRIADLAVDADPLSQQIGIHKVRRGSGDIAIQDALTEDETARAIIAGQRIADEEVDRGADLLIAGDIGIGNTTAAAVLVAALTNAEPVAVVGFGTGIDDASWARKTAAVRDALCRIRLVLPDPVGLLRCCGGADLAAMAGFCAQAAVRRTPLLLDGMVVTAAALVAERLAPGSWQWWQAGHQSTEPGHALALAALDLDPILDLRMRLGEGTGATAALLVLRAAVAALTSMTTFAEAGVAGTSTSPPS.

Glu-313 (proton acceptor) is an active-site residue.

Belongs to the CobT family.

It catalyses the reaction 5,6-dimethylbenzimidazole + nicotinate beta-D-ribonucleotide = alpha-ribazole 5'-phosphate + nicotinate + H(+). The protein operates within nucleoside biosynthesis; alpha-ribazole biosynthesis; alpha-ribazole from 5,6-dimethylbenzimidazole: step 1/2. In terms of biological role, catalyzes the synthesis of alpha-ribazole-5'-phosphate from nicotinate mononucleotide (NAMN) and 5,6-dimethylbenzimidazole (DMB). This chain is Nicotinate-nucleotide--dimethylbenzimidazole phosphoribosyltransferase, found in Mycobacterium leprae (strain Br4923).